Reading from the N-terminus, the 166-residue chain is Ribosome maturation factor RimM (166 aa).

One can recognise a PRC barrel domain in the interval 95–164 (EEEYYAYELV…KKIIVKEELL (70 aa)).

Belongs to the RimM family. As to quaternary structure, binds ribosomal protein uS19.

It localises to the cytoplasm. An accessory protein needed during the final step in the assembly of 30S ribosomal subunit, possibly for assembly of the head region. Essential for efficient processing of 16S rRNA. May be needed both before and after RbfA during the maturation of 16S rRNA. It has affinity for free ribosomal 30S subunits but not for 70S ribosomes. The sequence is that of Ribosome maturation factor RimM from Aquifex aeolicus (strain VF5).